The chain runs to 98 residues: NADH-ubiquinone oxidoreductase chain 4L (98 aa).

Transmembrane regions (helical) follow at residues 1–21, 30–50, and 61–81; these read MSVV…GLLV, LLCL…TVLT, and IILL…LVMI.

Belongs to the complex I subunit 4L family. As to quaternary structure, core subunit of respiratory chain NADH dehydrogenase (Complex I) which is composed of 45 different subunits.

It localises to the mitochondrion inner membrane. The catalysed reaction is a ubiquinone + NADH + 5 H(+)(in) = a ubiquinol + NAD(+) + 4 H(+)(out). Functionally, core subunit of the mitochondrial membrane respiratory chain NADH dehydrogenase (Complex I) which catalyzes electron transfer from NADH through the respiratory chain, using ubiquinone as an electron acceptor. Part of the enzyme membrane arm which is embedded in the lipid bilayer and involved in proton translocation. This is NADH-ubiquinone oxidoreductase chain 4L (MT-ND4L) from Lontra canadensis (North American river otter).